A 1220-amino-acid chain; its full sequence is Protein patched homolog 1 (1220 aa).

The segment at 1 to 27 is disordered; sequence MASDPRDPGPAGGVFGDLPPSYTRSPP. Topologically, residues 1-84 are cytoplasmic; that stretch reads MASDPRDPGP…GCHIQRHCGK (84 aa). A helical transmembrane segment spans residues 85–105; sequence VLFIGLLVFGALSVGLRVAAI. Residues 106 to 419 lie on the Extracellular side of the membrane; it reads ETDIEKLWVE…LNDIMKSFSD (314 aa). N-linked (GlcNAc...) asparagine glycosylation occurs at asparagine 397. A helical transmembrane segment spans residues 420–440; that stretch reads VSVIRVAGGYLLMLAYACVTM. Residues 421-579 enclose the SSD domain; the sequence is SVIRVAGGYL…LLIFPAILSL (159 aa). Topologically, residues 441-449 are cytoplasmic; the sequence is LRWDCAKSQ. The chain crosses the membrane as a helical span at residues 450-470; sequence GAVGLAGVLLVALSVAAGLGL. Over 471-484 the chain is Extracellular; it reads CSLLGLSFNAATTQ. Residues 485–505 form a helical membrane-spanning segment; it reads VLPSLALGIGVDDMFLLGHSF. Residues 506–528 lie on the Cytoplasmic side of the membrane; it reads TETRSNIPFKERTGDCLRRTGTS. The helical transmembrane segment at 529–549 threads the bilayer; the sequence is VALTSVNNMIAFFMAALVPIP. The Extracellular portion of the chain corresponds to 550–558; the sequence is ALRAFSLQA. A helical membrane pass occupies residues 559–579; sequence AVVVVFNFAMALLIFPAILSL. Residues 580–739 lie on the Cytoplasmic side of the membrane; sequence DLHRREDKRL…APLLLKPETK (160 aa). The chain crosses the membrane as a helical span at residues 740–760; that stretch reads TVVVVVFVALLSLSLYGTTMV. Topologically, residues 761-1016 are extracellular; it reads HDGLYLTDIV…WEQYIGLRHW (256 aa). Residues asparagine 865 and asparagine 888 are each glycosylated (N-linked (GlcNAc...) asparagine). The chain crosses the membrane as a helical span at residues 1017–1037; sequence FLLSISVVLACTFLVCAILLL. Over 1038–1044 the chain is Cytoplasmic; that stretch reads NPWTAGV. The helical transmembrane segment at 1045–1065 threads the bilayer; the sequence is IVFILPMMTVELFGIMGLIGI. The Extracellular segment spans residues 1066-1072; sequence KLSAIPV. A helical membrane pass occupies residues 1073-1093; the sequence is VILIASVGIGVEFTVHIALGF. Topologically, residues 1094 to 1110 are cytoplasmic; the sequence is LTAIGDRNTRSAVAMEH. The chain crosses the membrane as a helical span at residues 1111 to 1131; it reads MFAPVIDGAISTLLGVLMLAG. Topologically, residues 1132–1143 are extracellular; that stretch reads SEFDFIMRYFFA. The helical transmembrane segment at 1144-1164 threads the bilayer; the sequence is VLAILTLLGILNGLVLLPVLL. Over 1165-1220 the chain is Cytoplasmic; that stretch reads SLMGPPAEVVPANNANHLQSPSPEPMPPPMNHHGYYAGHIPKASHQAFSETSDSEY.

Belongs to the patched family. Glycosylation is necessary for SHH binding. In terms of tissue distribution, detected in embryonic presomitic mesoderm, neuroectoderm, tissue surrounding the notochord, ventral neural tube.

The protein localises to the membrane. Acts as a receptor for sonic hedgehog (SHH), indian hedgehog (IHH) and desert hedgehog (DHH). Associates with the smoothened protein (SMO) to transduce the hedgehog's proteins signal. This is Protein patched homolog 1 (ptch1) from Danio rerio (Zebrafish).